An 80-amino-acid polypeptide reads, in one-letter code: RNA-binding protein KhpA (80 aa).

A KH domain is found at Leu-33 to Asp-80.

Belongs to the KhpA RNA-binding protein family. Forms a complex with KhpB.

It localises to the cytoplasm. Functionally, a probable RNA chaperone. Forms a complex with KhpB which binds to cellular RNA and controls its expression. Plays a role in peptidoglycan (PG) homeostasis and cell length regulation. In Treponema pallidum (strain Nichols), this protein is RNA-binding protein KhpA.